Consider the following 89-residue polypeptide: Islet amyloid polypeptide (89 aa).

An N-terminal signal peptide occupies residues methionine 1–alanine 22. Residues threonine 23 to glutamate 31 constitute a propeptide that is removed on maturation. Cysteine 35 and cysteine 40 are disulfide-bonded. The residue at position 70 (tyrosine 70) is a Tyrosine amide. A propeptide spanning residues serine 74 to phenylalanine 89 is cleaved from the precursor.

This sequence belongs to the calcitonin family. In terms of assembly, can form homodimers. Interacts with IDE and INS. Interaction with INS inhibits homodimerization and fibril formation.

The protein localises to the secreted. In terms of biological role, amylin/IAPP is a glucoregulatory peptide hormone that plays an important role in the regulation of energy homeostasis. Selectively inhibits insulin-stimulated glucose utilization and glycogen deposition in muscle, while not affecting adipocyte glucose metabolism. IAPP function is mediated by the CALCR-RAMPs (AMYRs) receptor complexes. Amylin can also bind CALCR receptor in the absence of RAMPs, although it is more selective for AMYRs. The polypeptide is Islet amyloid polypeptide (IAPP) (Felis catus (Cat)).